We begin with the raw amino-acid sequence, 1157 residues long: Myosin tail region-interacting protein MTI1 (1157 aa).

Positions 5–69 (EVPFKVVAQF…PKSFVAVQGS (65 aa)) constitute an SH3 domain. Disordered stretches follow at residues 68 to 116 (GSEV…GPVP) and 135 to 156 (TAVSAQVQHDSSSGNGERKVPM). Polar residues predominate over residues 77 to 89 (SSPNTGSTEQRTI). Basic and acidic residues predominate over residues 93 to 110 (VEQKDLPEPISPETKKET). S103 carries the phosphoserine modification. Positions 138-149 (SAQVQHDSSSGN) are enriched in polar residues. A phosphoserine mark is found at S158 and S166. 2 disordered regions span residues 231–256 (PEPINRAQVESGRIETENDQLKKDLP) and 284–888 (KKAK…PKVA). Coiled-coil stretches lie at residues 234–301 (INRA…NKNE) and 356–430 (EKEQ…GASR). 3 stretches are compositionally biased toward basic and acidic residues: residues 242-256 (GRIETENDQLKKDLP), 284-296 (KKAKLEQEHERSA), and 312-383 (NEKT…RGEN). The segment covering 398–411 (EGDNDEEKEEEDSE) has biased composition (acidic residues). 2 stretches are compositionally biased toward basic and acidic residues: residues 412-423 (ENRRAALRERMA) and 506-524 (KTLDPHATTEHEQKQEHGT). Residues 544–558 (DSDEDTDDHEFEDAN) show a composition bias toward acidic residues. S565 carries the phosphoserine modification. Positions 574 to 585 (GNNESENVNSGE) are enriched in low complexity. Residues 597–606 (RTAEVSHDIE) show a composition bias toward basic and acidic residues. Residues 607–641 (NSSQNTTGNVLPVSSPQTRVARNGSINSLTKSISG) are compositionally biased toward polar residues. S621, S631, and S634 each carry phosphoserine. Phosphothreonine is present on T636. Phosphoserine is present on residues S638 and S647. Basic and acidic residues predominate over residues 642–653 (ENRRKSINEYHD). Residues 654–668 (TVSTNSSALTETAQD) show a composition bias toward polar residues. Pro residues-rich tracts occupy residues 691–738 (PHPV…PVSS) and 747–765 (SIPPVPPTPPAPPAPPAPL). Residues 769–778 (KHNEVEEHVK) are compositionally biased toward basic and acidic residues. The span at 795-808 (NTAPPLPRAPPVPP) shows a compositional bias: pro residues. Residues 832–853 (QNVTASTPSMMSTQQRVPTSVL) are compositionally biased toward polar residues. At T850 the chain carries Phosphothreonine. Position 889 is a phosphoserine (S889). Phosphothreonine is present on residues T894 and T895. Residue K1012 forms a Glycyl lysine isopeptide (Lys-Gly) (interchain with G-Cter in ubiquitin) linkage.

In terms of assembly, binds to the SH3 domains of the type I myosins MYO3 and MYO5.

It is found in the cytoplasm. The protein resides in the cytoskeleton. It localises to the actin patch. In terms of biological role, involved in the regulation of actin cytoskeleton. This is Myosin tail region-interacting protein MTI1 (BBC1) from Saccharomyces cerevisiae (strain ATCC 204508 / S288c) (Baker's yeast).